The primary structure comprises 158 residues: Probable cyclic pyranopterin monophosphate synthase (158 aa).

Substrate-binding positions include 75 to 77 (MCH) and 111 to 112 (ME). Residue aspartate 126 is part of the active site.

The protein belongs to the MoaC family. Homohexamer; trimer of dimers.

The enzyme catalyses (8S)-3',8-cyclo-7,8-dihydroguanosine 5'-triphosphate = cyclic pyranopterin phosphate + diphosphate. The protein operates within cofactor biosynthesis; molybdopterin biosynthesis. Functionally, catalyzes the conversion of (8S)-3',8-cyclo-7,8-dihydroguanosine 5'-triphosphate to cyclic pyranopterin monophosphate (cPMP). This chain is Probable cyclic pyranopterin monophosphate synthase, found in Methanocorpusculum labreanum (strain ATCC 43576 / DSM 4855 / Z).